Here is a 717-residue protein sequence, read N- to C-terminus: Polyribonucleotide nucleotidyltransferase (717 aa).

Residues D495 and D501 each coordinate Mg(2+). Residues 562–624 (PRMIMIQIPK…TALDSALSQI (63 aa)) enclose the KH domain. Residues 634–703 (GEVYEGKVKS…KTGKYRLSRK (70 aa)) enclose the S1 motif domain.

This sequence belongs to the polyribonucleotide nucleotidyltransferase family. It depends on Mg(2+) as a cofactor.

It is found in the cytoplasm. The catalysed reaction is RNA(n+1) + phosphate = RNA(n) + a ribonucleoside 5'-diphosphate. In terms of biological role, involved in mRNA degradation. Catalyzes the phosphorolysis of single-stranded polyribonucleotides processively in the 3'- to 5'-direction. This chain is Polyribonucleotide nucleotidyltransferase, found in Cytophaga hutchinsonii (strain ATCC 33406 / DSM 1761 / CIP 103989 / NBRC 15051 / NCIMB 9469 / D465).